We begin with the raw amino-acid sequence, 132 residues long: Succinate dehydrogenase cytochrome b560 subunit (132 aa).

2 consecutive transmembrane segments (helical) span residues 32 to 49 (LYLV…KFLF) and 59 to 81 (KFVK…FSMY). His-86 is a heme binding site. Residues 107–127 (VTMSTKLSLSLSLVLVLINCL) traverse the membrane as a helical segment.

The protein belongs to the cytochrome b560 family. Forms part of complex II containing four subunits: a 70 kDa flavoprotein (FP), a 27 kDa iron-sulfur protein (IP), a cytochrome B and a membrane-anchoring protein. It depends on heme as a cofactor.

The protein resides in the mitochondrion inner membrane. The protein operates within carbohydrate metabolism; tricarboxylic acid cycle. Membrane-anchoring subunit of succinate dehydrogenase (SDH) that is involved in complex II of the mitochondrial electron transport chain and is responsible for transferring electrons from succinate to ubiquinone (coenzyme Q). The protein is Succinate dehydrogenase cytochrome b560 subunit (SDH3) of Cyanidium caldarium (Red alga).